A 133-amino-acid chain; its full sequence is Large ribosomal subunit protein uL15 (133 aa).

The disordered stretch occupies residues 1 to 57; sequence MALEKLTPAAGSTHATKRIGRGQGSGNGKTAGKGNKGQRARKGYNEKRGFEGGQQPL. Gly residues predominate over residues 21 to 35; the sequence is RGQGSGNGKTAGKGN.

This sequence belongs to the universal ribosomal protein uL15 family. In terms of assembly, part of the 50S ribosomal subunit.

Its function is as follows. Binds to the 23S rRNA. This chain is Large ribosomal subunit protein uL15, found in Campylobacter concisus (strain 13826).